The following is a 207-amino-acid chain: MARCKS-related protein 1-B (207 aa).

Low complexity-rich tracts occupy residues methionine 1 to lysine 25 and alanine 63 to glycine 77. The segment at methionine 1–glutamate 207 is disordered. Glycine 2 carries N-myristoyl glycine lipidation. Residues glutamate 78 to threonine 90 are compositionally biased toward basic and acidic residues. An effector domain involved in lipid-binding region spans residues lysine 93 to lysine 116. Low complexity predominate over residues leucine 100–isoleucine 109. 2 stretches are compositionally biased toward basic and acidic residues: residues threonine 131–glutamate 154 and proline 163–alanine 182. Residues glutamate 195–glutamate 207 show a composition bias toward polar residues.

It belongs to the MARCKS family. In terms of tissue distribution, strongly expressed in brain and eye. Also detected at lower levels in muscle.

It is found in the cytoplasm. The protein localises to the cytoskeleton. Its subcellular location is the cell membrane. Involved in the control of cell movement by regulating actin cytoskeleton homeostasis and filopodium and lamellipodium formation. In Danio rerio (Zebrafish), this protein is MARCKS-related protein 1-B.